Reading from the N-terminus, the 744-residue chain is Eukaryotic translation initiation factor 3 subunit B (744 aa).

The segment at 1–20 (MAPSFDHLPDPEEDEYDEEE) is disordered. Positions 11 to 20 (PEEDEYDEEE) are enriched in acidic residues. In terms of domain architecture, RRM spans 40–126 (TFVVIDGLPE…HTLRVNKLTD (87 aa)). WD repeat units follow at residues 193–232 (DRQH…RQKR), 234–290 (AHPF…PLRS), 307–348 (PVKR…LLDK), and 577–622 (ADHY…LREE). The segment covering 699-714 (EREDAGLPRDPLEPLK) has biased composition (basic and acidic residues). The interval 699 to 722 (EREDAGLPRDPLEPLKSKMASGDE) is disordered.

The protein belongs to the eIF-3 subunit B family. As to quaternary structure, component of the eukaryotic translation initiation factor 3 (eIF-3) complex.

It is found in the cytoplasm. Its function is as follows. RNA-binding component of the eukaryotic translation initiation factor 3 (eIF-3) complex, which is involved in protein synthesis of a specialized repertoire of mRNAs and, together with other initiation factors, stimulates binding of mRNA and methionyl-tRNAi to the 40S ribosome. The eIF-3 complex specifically targets and initiates translation of a subset of mRNAs involved in cell proliferation. The protein is Eukaryotic translation initiation factor 3 subunit B (prt1) of Sclerotinia sclerotiorum (strain ATCC 18683 / 1980 / Ss-1) (White mold).